We begin with the raw amino-acid sequence, 513 residues long: ATP synthase subunit alpha (513 aa).

169-176 (GDRQTGKT) lines the ATP pocket.

The protein belongs to the ATPase alpha/beta chains family. In terms of assembly, F-type ATPases have 2 components, CF(1) - the catalytic core - and CF(0) - the membrane proton channel. CF(1) has five subunits: alpha(3), beta(3), gamma(1), delta(1), epsilon(1). CF(0) has three main subunits: a(1), b(2) and c(9-12). The alpha and beta chains form an alternating ring which encloses part of the gamma chain. CF(1) is attached to CF(0) by a central stalk formed by the gamma and epsilon chains, while a peripheral stalk is formed by the delta and b chains.

It localises to the cell inner membrane. It carries out the reaction ATP + H2O + 4 H(+)(in) = ADP + phosphate + 5 H(+)(out). In terms of biological role, produces ATP from ADP in the presence of a proton gradient across the membrane. The alpha chain is a regulatory subunit. The sequence is that of ATP synthase subunit alpha from Bordetella pertussis (strain Tohama I / ATCC BAA-589 / NCTC 13251).